The primary structure comprises 82 residues: Omega-ctenitoxin-Pn1a (82 aa).

An N-terminal signal peptide occupies residues 1 to 21 (MWLKIQVFLLAITLITLGIQA). Residues 22-37 (EPNSSPNNPLIEEEAR) constitute a propeptide that is removed on maturation. Disulfide bonds link Cys-39/Cys-54, Cys-46/Cys-59, Cys-53/Cys-70, and Cys-61/Cys-68. The propeptide occupies 72-82 (KKFIEFFGGGK).

Belongs to the neurotoxin 02 (plectoxin) family. As to expression, expressed by the venom gland.

Its subcellular location is the secreted. Antagonist of L-type calcium channels (Cav1/CACNA1). Induces immediate clockwise gyration and flaccid paralysis after 6 hours at dose levels of 5 ug per mouse. The protein is Omega-ctenitoxin-Pn1a of Phoneutria nigriventer (Brazilian armed spider).